Reading from the N-terminus, the 333-residue chain is Gap junction alpha-4 protein (333 aa).

The Cytoplasmic portion of the chain corresponds to 1 to 20; sequence MGDWGFLEKLLDQVQEHSTV. The chain crosses the membrane as a helical span at residues 21–40; sequence VGKIWLTVLFIFRILILGLA. The Extracellular segment spans residues 41-76; the sequence is GESVWGDEQSDFECNTAQPGCTNVCYDQAFPISHIR. The helical transmembrane segment at 77-99 threads the bilayer; the sequence is YWVLQFLFVSTPTLVYLGHVIYL. At 100–148 the chain is on the cytoplasmic side; it reads SRREERLRQKEGELRALPAKDPQVERALAAVERQMAKISVAEDGRLRIR. A helical membrane pass occupies residues 149 to 165; the sequence is GALMGTYVASVLCKSVL. The Extracellular segment spans residues 166-207; sequence EAGFLYGQWRLYGWTMEPVFVCQRAPCPYLVDCFVSRPTEKT. A helical transmembrane segment spans residues 208–230; that stretch reads IFIIFMLVVGLISLVLNLLELVH. The Cytoplasmic portion of the chain corresponds to 231 to 333; that stretch reads LLCRCLSRGM…SSSASKKQYV (103 aa). A disordered region spans residues 292-333; the sequence is ANLTTEERLASSRPPLFLDPPPQNGQKPPSRPSSSASKKQYV. The segment covering 323–333 has biased composition (low complexity); sequence PSSSASKKQYV.

The protein belongs to the connexin family. Alpha-type (group II) subfamily. A connexon is composed of a hexamer of connexins. In terms of tissue distribution, expressed in multiple organs and tissues, including heart, uterus, ovary, and blood vessel endothelium.

The protein localises to the cell membrane. Its subcellular location is the cell junction. It localises to the gap junction. Functionally, one gap junction consists of a cluster of closely packed pairs of transmembrane channels, the connexons, through which materials of low MW diffuse from one cell to a neighboring cell. This is Gap junction alpha-4 protein (GJA4) from Homo sapiens (Human).